The sequence spans 261 residues: Rhomboid-type serine protease 2 (261 aa).

The next 5 membrane-spanning stretches (helical) occupy residues Leu-17–Ile-37, Leu-58–Val-78, Ile-94–Leu-114, Pro-116–Val-136, and Leu-155–Val-175. The active-site Nucleophile is the Ser-124. His-177 is a catalytic residue.

This sequence belongs to the peptidase S54 family.

It localises to the golgi apparatus membrane. The protein resides in the golgi apparatus. The protein localises to the cis-Golgi network membrane. It carries out the reaction Cleaves type-1 transmembrane domains using a catalytic dyad composed of serine and histidine that are contributed by different transmembrane domains.. Probable rhomboid-type serine protease that catalyzes intramembrane proteolysis. In Eremothecium gossypii (strain ATCC 10895 / CBS 109.51 / FGSC 9923 / NRRL Y-1056) (Yeast), this protein is Rhomboid-type serine protease 2 (RBD2).